The following is a 626-amino-acid chain: MDHDTEVIVKDFNSILEELTFNSRPIITTLTKLAEENISCAQYFVDAIESRIEKCMPKQKLYAFYALDSICKNVGSPYTIYFSRNLFNLYKRTYLLVDNTTRTKLINMFKLWLNPNDTGLPLFEGSALEKIEQFLIKASALHQKNLQAMLPTPTVPLLLRDIDKLTCLTSERLKNQPNDEKLKMKLLVLSQLKQELKREKLTLNALKQVQMQLRQVFSQDQQVLQERMRYHELQQQQQQQQQQQQQQQQQQQQYHETKDMVGSYTQNSNSAIPLFGNNSDTTNQQNSLSSSLFGNISGVESFQEIEKKKSLNKINNLYASLKAEGLIYTPPKESIVTLYKKLNGHSNYSLDSHEKQLMKNLPKIPLLNDILSDCKAYFATVNIDVLNNPSLQLSEQTLLQENPIVQNNLIHLLYRSKPNKCSVCGKRFGNSESEKLLQNEHLDWHFRINTRIKGSQNTANTGISNSNLNTTTTRKNIQSRNWYLSDSQWAAFKDDEITSTKHKNDYTDPHANKNIDKSALNIHADENDEGSVDNTLGSDRSNELEIRGKYVVVPETSQDMAFKCPICKETVTGVYDEESGEWVWKNTIEVNGKYFHSTCYHETSQNSSKSNSGKVGLDDLKKLVTK.

Positions 1-130 are interaction with RBP1 CTD (CID); sequence MDHDTEVIVK…PLFEGSALEK (130 aa). Residues 4-139 enclose the CID domain; sequence DTEVIVKDFN…KIEQFLIKAS (136 aa). A disordered region spans residues 263–286; it reads SYTQNSNSAIPLFGNNSDTTNQQN.

Component of the CFIA complex, which is composed of RNA14, RNA15, PCF11 and CLP1. Interacts with RNA14, RNA15 and RTT103. Interacts directly with the phosphorylated CTD domain of RPB1/RNA polymerase II.

Its subcellular location is the nucleus. Functionally, component of the cleavage factor IA (CFIA) complex, which is involved in the endonucleolytic cleavage during polyadenylation-dependent pre-mRNA 3'-end formation and cooperates with cleavage factor NAB4/CFIB and the cleavage and polyadenylation factor (CPF) complex. Independently involved in RNA polymerase II transcript termination. Binds RNA. Seems to bridge RNA polymerase II and the native transcript and may be involved in dismantling the RNA polymerase II elongation complex. The polypeptide is Protein PCF11 (PCF11) (Saccharomyces cerevisiae (strain ATCC 204508 / S288c) (Baker's yeast)).